We begin with the raw amino-acid sequence, 118 residues long: Large ribosomal subunit protein bL19 (118 aa).

The protein belongs to the bacterial ribosomal protein bL19 family.

This protein is located at the 30S-50S ribosomal subunit interface and may play a role in the structure and function of the aminoacyl-tRNA binding site. This is Large ribosomal subunit protein bL19 (rplS) from Serratia marcescens.